The chain runs to 361 residues: Heme A synthase (361 aa).

8 consecutive transmembrane segments (helical) span residues 22–42, 109–129, 139–159, 175–195, 208–228, 269–289, 303–323, and 324–344; these read LWVR…VLVG, LLAR…WVTG, LLGI…MVAS, HLTI…GLAP, FAFW…LVAG, FVHR…AIAT, VLLF…LLMV, and VPMD…GFAT. Histidine 271 contributes to the heme binding site. Histidine 332 provides a ligand contact to heme.

It belongs to the COX15/CtaA family. Type 2 subfamily. As to quaternary structure, interacts with CtaB. It depends on heme b as a cofactor.

It localises to the cell membrane. The enzyme catalyses Fe(II)-heme o + 2 A + H2O = Fe(II)-heme a + 2 AH2. It participates in porphyrin-containing compound metabolism; heme A biosynthesis; heme A from heme O: step 1/1. Its function is as follows. Catalyzes the conversion of heme O to heme A by two successive hydroxylations of the methyl group at C8. The first hydroxylation forms heme I, the second hydroxylation results in an unstable dihydroxymethyl group, which spontaneously dehydrates, resulting in the formyl group of heme A. This Chelativorans sp. (strain BNC1) protein is Heme A synthase.